Consider the following 321-residue polypeptide: Lipoyl synthase (321 aa).

C68, C73, C79, C94, C98, C101, and S308 together coordinate [4Fe-4S] cluster. Residues 80–297 (FNHGTATFMI…REFAESIGFT (218 aa)) form the Radical SAM core domain.

The protein belongs to the radical SAM superfamily. Lipoyl synthase family. It depends on [4Fe-4S] cluster as a cofactor.

The protein localises to the cytoplasm. The enzyme catalyses [[Fe-S] cluster scaffold protein carrying a second [4Fe-4S](2+) cluster] + N(6)-octanoyl-L-lysyl-[protein] + 2 oxidized [2Fe-2S]-[ferredoxin] + 2 S-adenosyl-L-methionine + 4 H(+) = [[Fe-S] cluster scaffold protein] + N(6)-[(R)-dihydrolipoyl]-L-lysyl-[protein] + 4 Fe(3+) + 2 hydrogen sulfide + 2 5'-deoxyadenosine + 2 L-methionine + 2 reduced [2Fe-2S]-[ferredoxin]. Its pathway is protein modification; protein lipoylation via endogenous pathway; protein N(6)-(lipoyl)lysine from octanoyl-[acyl-carrier-protein]: step 2/2. Catalyzes the radical-mediated insertion of two sulfur atoms into the C-6 and C-8 positions of the octanoyl moiety bound to the lipoyl domains of lipoate-dependent enzymes, thereby converting the octanoylated domains into lipoylated derivatives. This chain is Lipoyl synthase, found in Shewanella sediminis (strain HAW-EB3).